Here is a 494-residue protein sequence, read N- to C-terminus: Glutamate--tRNA ligase (494 aa).

Positions 15 to 25 (PSPTGNPHVGL) match the 'HIGH' region motif. Zn(2+)-binding residues include cysteine 112, cysteine 114, cysteine 139, and glutamate 141. A 'KMSKS' region motif is present at residues 260–264 (KLSKR). Lysine 263 serves as a coordination point for ATP.

It belongs to the class-I aminoacyl-tRNA synthetase family. Glutamate--tRNA ligase type 1 subfamily. As to quaternary structure, monomer. The cofactor is Zn(2+).

It is found in the cytoplasm. It carries out the reaction tRNA(Glu) + L-glutamate + ATP = L-glutamyl-tRNA(Glu) + AMP + diphosphate. Catalyzes the attachment of glutamate to tRNA(Glu) in a two-step reaction: glutamate is first activated by ATP to form Glu-AMP and then transferred to the acceptor end of tRNA(Glu). The sequence is that of Glutamate--tRNA ligase from Streptomyces coelicolor (strain ATCC BAA-471 / A3(2) / M145).